The primary structure comprises 176 residues: Ribosome rescue factor SmrB (176 aa).

One can recognise a Smr domain in the interval 97-172 (LDMHGMTQQE…GDGALLVLLS (76 aa)).

Belongs to the SmrB family. In terms of assembly, associates with collided ribosomes, but not with correctly translating polysomes.

Acts as a ribosome collision sensor. Detects stalled/collided disomes (pairs of ribosomes where the leading ribosome is stalled and a second ribosome has collided with it) and endonucleolytically cleaves mRNA at the 5' boundary of the stalled ribosome. Stalled/collided disomes form a new interface (primarily via the 30S subunits) that binds SmrB. Cleaved mRNA becomes available for tmRNA ligation, leading to ribosomal subunit dissociation and rescue of stalled ribosomes. The polypeptide is Ribosome rescue factor SmrB (Vibrio vulnificus (strain CMCP6)).